The chain runs to 324 residues: Acetyl-coenzyme A carboxylase carboxyl transferase subunit alpha (324 aa).

The region spanning 37-291 (KLDKRLDRLK…QEYVLQEWLK (255 aa)) is the CoA carboxyltransferase C-terminal domain.

Belongs to the AccA family. Acetyl-CoA carboxylase is a heterohexamer composed of biotin carboxyl carrier protein (AccB), biotin carboxylase (AccC) and two subunits each of ACCase subunit alpha (AccA) and ACCase subunit beta (AccD).

It is found in the cytoplasm. The enzyme catalyses N(6)-carboxybiotinyl-L-lysyl-[protein] + acetyl-CoA = N(6)-biotinyl-L-lysyl-[protein] + malonyl-CoA. It participates in lipid metabolism; malonyl-CoA biosynthesis; malonyl-CoA from acetyl-CoA: step 1/1. Component of the acetyl coenzyme A carboxylase (ACC) complex. First, biotin carboxylase catalyzes the carboxylation of biotin on its carrier protein (BCCP) and then the CO(2) group is transferred by the carboxyltransferase to acetyl-CoA to form malonyl-CoA. The chain is Acetyl-coenzyme A carboxylase carboxyl transferase subunit alpha from Chlamydia trachomatis serovar D (strain ATCC VR-885 / DSM 19411 / UW-3/Cx).